The sequence spans 109 residues: Large ribosomal subunit protein P2 (109 aa).

The disordered stretch occupies residues Ala63 to Asp109. Positions Gly68–Ala79 are enriched in gly residues. Acidic residues predominate over residues Glu91 to Met103. The residue at position 99 (Ser99) is a Phosphoserine.

The protein belongs to the eukaryotic ribosomal protein P1/P2 family. As to quaternary structure, P1 and P2 exist as dimers at the large ribosomal subunit.

In terms of biological role, plays an important role in the elongation step of protein synthesis. The sequence is that of Large ribosomal subunit protein P2 from Fusarium culmorum.